The following is a 327-amino-acid chain: Phenylalanine--tRNA ligase alpha subunit (327 aa).

Glu252 contributes to the Mg(2+) binding site.

The protein belongs to the class-II aminoacyl-tRNA synthetase family. Phe-tRNA synthetase alpha subunit type 1 subfamily. As to quaternary structure, tetramer of two alpha and two beta subunits. Mg(2+) is required as a cofactor.

It is found in the cytoplasm. The enzyme catalyses tRNA(Phe) + L-phenylalanine + ATP = L-phenylalanyl-tRNA(Phe) + AMP + diphosphate + H(+). The protein is Phenylalanine--tRNA ligase alpha subunit of Vibrio parahaemolyticus serotype O3:K6 (strain RIMD 2210633).